The primary structure comprises 180 residues: NAD(P)H-quinone oxidoreductase subunit I, chloroplastic (180 aa).

2 consecutive 4Fe-4S ferredoxin-type domains span residues 55–84 and 95–124; these read GRIH…VDWR and LNYS…MTEE. Positions 64, 67, 70, 74, 104, 107, 110, and 114 each coordinate [4Fe-4S] cluster.

This sequence belongs to the complex I 23 kDa subunit family. In terms of assembly, NDH is composed of at least 16 different subunits, 5 of which are encoded in the nucleus. [4Fe-4S] cluster serves as cofactor.

The protein resides in the plastid. It is found in the chloroplast thylakoid membrane. It catalyses the reaction a plastoquinone + NADH + (n+1) H(+)(in) = a plastoquinol + NAD(+) + n H(+)(out). The catalysed reaction is a plastoquinone + NADPH + (n+1) H(+)(in) = a plastoquinol + NADP(+) + n H(+)(out). NDH shuttles electrons from NAD(P)H:plastoquinone, via FMN and iron-sulfur (Fe-S) centers, to quinones in the photosynthetic chain and possibly in a chloroplast respiratory chain. The immediate electron acceptor for the enzyme in this species is believed to be plastoquinone. Couples the redox reaction to proton translocation, and thus conserves the redox energy in a proton gradient. This chain is NAD(P)H-quinone oxidoreductase subunit I, chloroplastic, found in Amborella trichopoda.